Consider the following 198-residue polypeptide: UPF0301 protein Tfu_2389 (198 aa).

This sequence belongs to the UPF0301 (AlgH) family.

This is UPF0301 protein Tfu_2389 from Thermobifida fusca (strain YX).